Here is a 1779-residue protein sequence, read N- to C-terminus: Fibronectin type III domain-containing protein 1 (1779 aa).

An N-terminal signal peptide occupies residues 1-29; the sequence is MAPEARASPRLLLRAALLLLAALLPVASS. 4 consecutive Fibronectin type-III domains span residues 33-126, 103-203, 207-302, and 307-402; these read PVDH…KAPR, PNKP…AEED, VPED…TPES, and APEN…IPTT. Over residues 400-413 the composition is skewed to polar residues; the sequence is PTTSSTEASVQPNG. 4 disordered regions span residues 400–442, 459–1108, 1120–1227, and 1330–1401; these read PTTS…MPPA, NGVA…RNLD, EENT…KPNG, and PTTT…PPGT. Positions 423–437 are enriched in low complexity; sequence QQPSSSAPKVAASSQ. Positions 493–506 are enriched in polar residues; the sequence is NPRSSRLETLNQKQ. Over residues 534–554 the composition is skewed to basic and acidic residues; sequence SRKEGMDRRGPSLDPHPHPRV. Polar residues-rich tracts occupy residues 557–570 and 590–607; these read SASS…STDN and SSGS…TSAP. The span at 629–640 shows a compositional bias: low complexity; sequence ASSSTSRQSHSS. At Ser-651 the chain carries Phosphoserine. Low complexity predominate over residues 676–694; sequence HASSSHTTSRTASSSHPSA. Phosphoserine is present on Ser-699. Positions 707–720 are enriched in basic and acidic residues; sequence DSDRAAEDTIRRAE. Composition is skewed to polar residues over residues 763 to 784 and 861 to 875; these read PSVS…SLPA and PLSS…STTD. Positions 879-904 are enriched in low complexity; it reads PQTSPASTSRQPSPARPPASRSQPSP. Composition is skewed to polar residues over residues 957–971 and 1003–1020; these read APQN…TYED and VGSQ…SQAG. A compositionally biased stretch (low complexity) spans 1085 to 1097; sequence LSTSVKKWPSSSS. Over residues 1098–1108 the composition is skewed to basic and acidic residues; it reads PRDKYADRNLD. Polar residues-rich tracts occupy residues 1147-1159 and 1166-1177; these read NPAT…NTHS and RAPSSYSSTTPM. Low complexity predominate over residues 1330–1389; that stretch reads PTTTMPPSTTTTTVPPTTTLPPTTTTTRRTTTTRRTTTTRRPTTTTRATRRTTTTTTTPE. The Fibronectin type-III 5 domain occupies 1543–1637; sequence APRNITVVAM…PSVSFVTESD (95 aa). N-linked (GlcNAc...) asparagine glycosylation occurs at Asn-1546.

It is found in the secreted. Functionally, may be an activator of G protein signaling. The polypeptide is Fibronectin type III domain-containing protein 1 (Fndc1) (Rattus norvegicus (Rat)).